The chain runs to 619 residues: MSKSKCSVGPMSSVVAPAKESNAVGPREVELILVKEQNGVQLTNSTLINPPQTPVEAQERETWSKKIDFLLSVIGFAVDLANVWRFPYLCYKNGGGAFLVPYLLFMVIAGMPLFYMELALGQFNREGAAGVWKICPVLKGVGFTVILISFYVGFFYNVIIAWALHYFFSSFTMDLPWIHCNNTWNSPNCSDAHASNSSDGLGLNDTFGTTPAAEYFERGVLHLHQSRGIDDLGPPRWQLTACLVLVIVLLYFSLWKGVKTSGKVVWITATMPYVVLTALLLRGVTLPGAMDGIRAYLSVDFYRLCEASVWIDAATQVCFSLGVGFGVLIAFSSYNKFTNNCYRDAIITTSINSLTSFSSGFVVFSFLGYMAQKHNVPIRDVATDGPGLIFIIYPEAIATLPLSSAWAAVFFLMLLTLGIDSAMGGMESVITGLVDEFQLLHRHRELFTLGIVLATFLLSLFCVTNGGIYVFTLLDHFAAGTSILFGVLIEAIGVAWFYGVQQFSDDIKQMTGQRPNLYWRLCWKLVSPCFLLYVVVVSIVTFRPPHYGAYIFPDWANALGWIIATSSMAMVPIYATYKFCSLPGSFREKLAYAITPEKDHQLVDRGEVRQFTLRHWLLL.

Over 1-56 the chain is Cytoplasmic; sequence MSKSKCSVGPMSSVVAPAKESNAVGPREVELILVKEQNGVQLTNSTLINPPQTPVE. The discontinuously helical transmembrane segment at 57–95 threads the bilayer; sequence AQERETWSKKIDFLLSVIGFAVDLANVWRFPYLCYKNGG. Na(+)-binding residues include glycine 75, alanine 77, valine 78, aspartate 79, and asparagine 82. Residue aspartate 79 coordinates dopamine. Transmembrane regions (helical) follow at residues 96-127 and 128-171; these read GAFL…NREG and AAGV…FSSF. Dopamine is bound by residues serine 149 and glycine 153. The Extracellular segment spans residues 172 to 235; the sequence is TMDLPWIHCN…SRGIDDLGPP (64 aa). An intrachain disulfide couples cysteine 180 to cysteine 189. Asparagine 181, asparagine 188, asparagine 196, and asparagine 204 each carry an N-linked (GlcNAc...) asparagine glycan. 2 consecutive transmembrane segments (helical) span residues 236-255 and 256-286; these read RWQL…FSLW and KGVK…GVTL. The Extracellular portion of the chain corresponds to 287-305; it reads PGAMDGIRAYLSVDFYRLC. Residues 306–334 form a discontinuously helical membrane-spanning segment; that stretch reads EASVWIDAATQVCFSLGVGFGVLIAFSSY. Glutamine 316 is a binding site for chloride. Phenylalanine 319 serves as a coordination point for dopamine. Residues serine 320 and asparagine 352 each coordinate Na(+). Residue serine 320 coordinates chloride. Residues 335-375 traverse the membrane as a helical segment; it reads NKFTNNCYRDAIITTSINSLTSFSSGFVVFSFLGYMAQKHN. Serine 356 lines the chloride pocket. Residues 376-399 are Extracellular-facing; that stretch reads VPIRDVATDGPGLIFIIYPEAIAT. Transmembrane regions (helical) follow at residues 400-441, 442-465, and 466-498; these read LPLS…QLLH, RHRE…CVTN, and GGIY…AWFY. Positions 417, 420, and 421 each coordinate Na(+). Positions 421 and 422 each coordinate dopamine. At 499–515 the chain is on the cytoplasmic side; that stretch reads GVQQFSDDIKQMTGQRP. Residues 516–541 traverse the membrane as a helical segment; sequence NLYWRLCWKLVSPCFLLYVVVVSIVT. The Extracellular portion of the chain corresponds to 542 to 552; it reads FRPPHYGAYIF. A helical membrane pass occupies residues 553–582; the sequence is PDWANALGWIIATSSMAMVPIYATYKFCSL. The interval 560 to 589 is interaction with TGFB1I1; that stretch reads GWIIATSSMAMVPIYATYKFCSLPGSFREK. Residues 583-619 lie on the Cytoplasmic side of the membrane; it reads PGSFREKLAYAITPEKDHQLVDRGEVRQFTLRHWLLL.

The protein belongs to the sodium:neurotransmitter symporter (SNF) (TC 2.A.22) family. SLC6A3 subfamily. As to quaternary structure, monomer. Homooligomer; disulfide-linked. Interacts with PRKCABP and TGFB1I1. Interacts (via N-terminus) with SYNGR3 (via N-terminus). Interacts with SLC18A2. Interacts with TOR1A (ATP-bound); TOR1A regulates SLC6A3 subcellular location. Interacts with alpha-synuclein/SNCA. Interacts with SEPTIN4. Brain. Expressed in the substantia nigra and ventral tegmental area, regions that contain dopaminergic cell bodies.

The protein localises to the cell membrane. The protein resides in the cell projection. It localises to the neuron projection. It is found in the axon. It carries out the reaction dopamine(out) + chloride(out) + Na(+)(out) = dopamine(in) + chloride(in) + Na(+)(in). The enzyme catalyses (R)-noradrenaline(out) + chloride(out) + Na(+)(out) = (R)-noradrenaline(in) + chloride(in) + Na(+)(in). The catalysed reaction is dopamine(out) + chloride(out) + 2 Na(+)(out) = dopamine(in) + chloride(in) + 2 Na(+)(in). With respect to regulation, inhibited by mazindol, cocaine, desipramine, GBR 12783 dihydrochloride, GBR 12909 dihydrochloride and nomifensine. Inhibited by zinc ions. Its function is as follows. Mediates sodium- and chloride-dependent transport of dopamine. Also mediates sodium- and chloride-dependent transport of norepinephrine (also known as noradrenaline). Regulator of light-dependent retinal hyaloid vessel regression, downstream of OPN5 signaling. The sequence is that of Sodium-dependent dopamine transporter (Slc6a3) from Rattus norvegicus (Rat).